The primary structure comprises 326 residues: Beta-ketoacyl-[acyl-carrier-protein] synthase III (326 aa).

Catalysis depends on residues C113 and H253. The tract at residues 254 to 258 is ACP-binding; the sequence is QANIR. Residue N283 is part of the active site.

This sequence belongs to the thiolase-like superfamily. FabH family. As to quaternary structure, homodimer.

The protein resides in the cytoplasm. It carries out the reaction malonyl-[ACP] + acetyl-CoA + H(+) = 3-oxobutanoyl-[ACP] + CO2 + CoA. It functions in the pathway lipid metabolism; fatty acid biosynthesis. In terms of biological role, catalyzes the condensation reaction of fatty acid synthesis by the addition to an acyl acceptor of two carbons from malonyl-ACP. Catalyzes the first condensation reaction which initiates fatty acid synthesis and may therefore play a role in governing the total rate of fatty acid production. Possesses both acetoacetyl-ACP synthase and acetyl transacylase activities. Its substrate specificity determines the biosynthesis of branched-chain and/or straight-chain of fatty acids. This is Beta-ketoacyl-[acyl-carrier-protein] synthase III from Wolbachia sp. subsp. Brugia malayi (strain TRS).